Reading from the N-terminus, the 513-residue chain is 2-isopropylmalate synthase (513 aa).

The Pyruvate carboxyltransferase domain maps to 4–268; it reads IKIFDTTLRD…ETGIKTELIY (265 aa). 4 residues coordinate Mn(2+): D13, H203, H205, and N239. Residues 392–513 form a regulatory domain region; sequence KLVHFHVHTG…GLLRKNGGAE (122 aa).

This sequence belongs to the alpha-IPM synthase/homocitrate synthase family. LeuA type 1 subfamily. In terms of assembly, homodimer. Requires Mn(2+) as cofactor.

It localises to the cytoplasm. The catalysed reaction is 3-methyl-2-oxobutanoate + acetyl-CoA + H2O = (2S)-2-isopropylmalate + CoA + H(+). Its pathway is amino-acid biosynthesis; L-leucine biosynthesis; L-leucine from 3-methyl-2-oxobutanoate: step 1/4. In terms of biological role, catalyzes the condensation of the acetyl group of acetyl-CoA with 3-methyl-2-oxobutanoate (2-ketoisovalerate) to form 3-carboxy-3-hydroxy-4-methylpentanoate (2-isopropylmalate). The chain is 2-isopropylmalate synthase from Thermotoga petrophila (strain ATCC BAA-488 / DSM 13995 / JCM 10881 / RKU-1).